Reading from the N-terminus, the 629-residue chain is mRNA cleavage and polyadenylation factor CLP1 (629 aa).

The ATP site is built by Glu-21 and Lys-72. The interval 142-166 is disordered; sequence YIAPRTTDPNTETESDPSGTAAATV. The span at 148-159 shows a compositional bias: polar residues; the sequence is TDPNTETESDPS. 183-188 lines the ATP pocket; it reads SAGKTS. Residues 562–582 form a disordered region; that stretch reads PPRGGGGAGQPDSSTNPTDDE.

This sequence belongs to the Clp1 family. Clp1 subfamily. As to quaternary structure, component of a pre-mRNA cleavage factor complex. Interacts directly with PCF11.

The protein resides in the nucleus. Its function is as follows. Required for endonucleolytic cleavage during polyadenylation-dependent pre-mRNA 3'-end formation. The sequence is that of mRNA cleavage and polyadenylation factor CLP1 from Mycosarcoma maydis (Corn smut fungus).